Here is a 230-residue protein sequence, read N- to C-terminus: Leucyl/phenylalanyl-tRNA--protein transferase (230 aa).

It belongs to the L/F-transferase family.

Its subcellular location is the cytoplasm. The catalysed reaction is N-terminal L-lysyl-[protein] + L-leucyl-tRNA(Leu) = N-terminal L-leucyl-L-lysyl-[protein] + tRNA(Leu) + H(+). The enzyme catalyses N-terminal L-arginyl-[protein] + L-leucyl-tRNA(Leu) = N-terminal L-leucyl-L-arginyl-[protein] + tRNA(Leu) + H(+). It carries out the reaction L-phenylalanyl-tRNA(Phe) + an N-terminal L-alpha-aminoacyl-[protein] = an N-terminal L-phenylalanyl-L-alpha-aminoacyl-[protein] + tRNA(Phe). Functions in the N-end rule pathway of protein degradation where it conjugates Leu, Phe and, less efficiently, Met from aminoacyl-tRNAs to the N-termini of proteins containing an N-terminal arginine or lysine. The protein is Leucyl/phenylalanyl-tRNA--protein transferase of Syntrophotalea carbinolica (strain DSM 2380 / NBRC 103641 / GraBd1) (Pelobacter carbinolicus).